Reading from the N-terminus, the 548-residue chain is Glucose-6-phosphate isomerase (548 aa).

Glutamate 355 functions as the Proton donor in the catalytic mechanism. Residues histidine 386 and lysine 514 contribute to the active site.

The protein belongs to the GPI family.

It is found in the cytoplasm. The enzyme catalyses alpha-D-glucose 6-phosphate = beta-D-fructose 6-phosphate. Its pathway is carbohydrate biosynthesis; gluconeogenesis. The protein operates within carbohydrate degradation; glycolysis; D-glyceraldehyde 3-phosphate and glycerone phosphate from D-glucose: step 2/4. Its function is as follows. Catalyzes the reversible isomerization of glucose-6-phosphate to fructose-6-phosphate. This Photorhabdus laumondii subsp. laumondii (strain DSM 15139 / CIP 105565 / TT01) (Photorhabdus luminescens subsp. laumondii) protein is Glucose-6-phosphate isomerase.